The primary structure comprises 75 residues: UPF0352 protein YejL (75 aa).

The protein belongs to the UPF0352 family.

This is UPF0352 protein YejL from Escherichia coli O127:H6 (strain E2348/69 / EPEC).